Reading from the N-terminus, the 282-residue chain is Urease accessory protein UreD (282 aa).

Belongs to the UreD family. As to quaternary structure, ureD, UreF and UreG form a complex that acts as a GTP-hydrolysis-dependent molecular chaperone, activating the urease apoprotein by helping to assemble the nickel containing metallocenter of UreC. The UreE protein probably delivers the nickel.

Its subcellular location is the cytoplasm. Functionally, required for maturation of urease via the functional incorporation of the urease nickel metallocenter. This chain is Urease accessory protein UreD, found in Methylobacterium sp. (strain 4-46).